The sequence spans 415 residues: Diaminopimelate decarboxylase (415 aa).

An N6-(pyridoxal phosphate)lysine modification is found at K54. Pyridoxal 5'-phosphate contacts are provided by residues G223 and 264 to 267; that span reads EPGR. Substrate is bound by residues R267, R303, and Y307. C338 (proton donor) is an active-site residue. Positions 339 and 374 each coordinate substrate. Y374 provides a ligand contact to pyridoxal 5'-phosphate.

Belongs to the Orn/Lys/Arg decarboxylase class-II family. LysA subfamily. In terms of assembly, homodimer. Pyridoxal 5'-phosphate serves as cofactor.

The catalysed reaction is meso-2,6-diaminopimelate + H(+) = L-lysine + CO2. It functions in the pathway amino-acid biosynthesis; L-lysine biosynthesis via DAP pathway; L-lysine from DL-2,6-diaminopimelate: step 1/1. Its function is as follows. Specifically catalyzes the decarboxylation of meso-diaminopimelate (meso-DAP) to L-lysine. The chain is Diaminopimelate decarboxylase from Buchnera aphidicola subsp. Schizaphis graminum (strain Sg).